Here is a 189-residue protein sequence, read N- to C-terminus: Ribosome hibernation promotion factor (189 aa).

The protein belongs to the HPF/YfiA ribosome-associated protein family. Long HPF subfamily. As to quaternary structure, interacts with 100S ribosomes.

The protein resides in the cytoplasm. Its function is as follows. Required for dimerization of active 70S ribosomes into 100S ribosomes in stationary phase; 100S ribosomes are translationally inactive and sometimes present during exponential growth. The sequence is that of Ribosome hibernation promotion factor from Staphylococcus epidermidis (strain ATCC 35984 / DSM 28319 / BCRC 17069 / CCUG 31568 / BM 3577 / RP62A).